Reading from the N-terminus, the 416-residue chain is Glutamyl-tRNA reductase (416 aa).

Residues 50-53, serine 109, 114-116, and glutamine 120 contribute to the substrate site; these read TCNR and EPQ. Cysteine 51 (nucleophile) is an active-site residue. Position 189 to 194 (189 to 194) interacts with NADP(+); sequence GAGEMI.

The protein belongs to the glutamyl-tRNA reductase family. As to quaternary structure, homodimer.

It carries out the reaction (S)-4-amino-5-oxopentanoate + tRNA(Glu) + NADP(+) = L-glutamyl-tRNA(Glu) + NADPH + H(+). It participates in porphyrin-containing compound metabolism; protoporphyrin-IX biosynthesis; 5-aminolevulinate from L-glutamyl-tRNA(Glu): step 1/2. Its function is as follows. Catalyzes the NADPH-dependent reduction of glutamyl-tRNA(Glu) to glutamate 1-semialdehyde (GSA). In Ruthia magnifica subsp. Calyptogena magnifica, this protein is Glutamyl-tRNA reductase.